The chain runs to 277 residues: Glutamate racemase (277 aa).

Substrate contacts are provided by residues D13–S14 and Y45–G46. C76 functions as the Proton donor/acceptor in the catalytic mechanism. N77 to T78 provides a ligand contact to substrate. Residue C186 is the Proton donor/acceptor of the active site. Substrate is bound at residue T187–H188.

This sequence belongs to the aspartate/glutamate racemases family.

The enzyme catalyses L-glutamate = D-glutamate. It participates in cell wall biogenesis; peptidoglycan biosynthesis. Provides the (R)-glutamate required for cell wall biosynthesis. In Ralstonia nicotianae (strain ATCC BAA-1114 / GMI1000) (Ralstonia solanacearum), this protein is Glutamate racemase.